The chain runs to 87 residues: Large ribosomal subunit protein bL31B (87 aa).

This sequence belongs to the bacterial ribosomal protein bL31 family. Type B subfamily. Part of the 50S ribosomal subunit.

The chain is Large ribosomal subunit protein bL31B from Escherichia coli O8 (strain IAI1).